Consider the following 356-residue polypeptide: Protein-arginine kinase (356 aa).

Positions 22 to 249 (FRPISTLSLS…SKILSAETEA (228 aa)) constitute a Phosphagen kinase C-terminal domain. Residues 25-29 (ISTLS), 172-176 (VARAF), and 202-207 (SSLLPL) contribute to the ATP site.

This sequence belongs to the ATP:guanido phosphotransferase family.

It carries out the reaction L-arginyl-[protein] + ATP = N(omega)-phospho-L-arginyl-[protein] + ADP + H(+). In terms of biological role, catalyzes the specific phosphorylation of arginine residues in proteins. This chain is Protein-arginine kinase, found in Chlamydia muridarum (strain MoPn / Nigg).